A 539-amino-acid polypeptide reads, in one-letter code: Nucleoporin NUP60 (539 aa).

A phosphoserine mark is found at serine 10, serine 49, serine 81, and serine 89. A disordered region spans residues 44 to 80 (DSARVSPRNNVANKQPRNESFNRRISSMPGGYFHSEI). Residues 91–118 (VVSAVGEARNDIENKEEEYDETHETNIS) adopt a coiled-coil conformation. A phosphoserine mark is found at serine 162, serine 171, serine 214, and serine 222. 2 stretches are compositionally biased toward polar residues: residues 242 to 252 (TANTSAQSIAS) and 258 to 267 (SGVSKSAPSK). 3 disordered regions span residues 242-267 (TANT…APSK), 305-329 (IRKH…TTVK), and 347-493 (NATK…GKHI). Positions 347–359 (NATKISPSAPSKD) are enriched in polar residues. Phosphoserine occurs at positions 352, 360, 374, and 382. 2 stretches are compositionally biased toward polar residues: residues 395–433 (SAFN…TNLQ) and 448–485 (GDST…LSQE). 2 FXF repeats span residues 399-401 (FSF) and 427-429 (FNF). Threonine 460 bears the Phosphothreonine mark. The stretch at 469–471 (FVF) is one FXF 3 repeat. Residues serine 480 and serine 483 each carry the phosphoserine modification. Residues 509-511 (FDF) form an FXF 4 repeat.

As to quaternary structure, component of the nuclear pore complex (NPC). NPC constitutes the exclusive means of nucleocytoplasmic transport. NPCs allow the passive diffusion of ions and small molecules and the active, nuclear transport receptor-mediated bidirectional transport of macromolecules such as proteins, RNAs, ribonucleoparticles (RNPs), and ribosomal subunits across the nuclear envelope. Due to its 8-fold rotational symmetry, all subunits are present with 8 copies or multiples thereof. Binds to NUP1 and NUP2 forming the nuclear basket and the distal ring. The interaction with NUP2 is GSP1-GTP-dependent. Interacts through its FG repeats with karyopherins, such as KAP123 and KAP95-SRP1 (KAP60). Also interacts with GSP1-GTP and SRM1 (PRP20), where NUP60 reduces SRM1 activity, thus inhibiting GSP1 guanine nucleotide dissociation. Post-translationally, phosphorylated by CDC28.

It localises to the nucleus. It is found in the nuclear pore complex. The protein localises to the nucleus membrane. Its function is as follows. Functions as a component of the nuclear pore complex (NPC). NPC components, collectively referred to as nucleoporins (NUPs), can play the role of both NPC structural components and of docking or interaction partners for transiently associated nuclear transport factors. Active directional transport is assured by both, a Phe-Gly (FG) repeat affinity gradient for these transport factors across the NPC and a transport cofactor concentration gradient across the nuclear envelope (GSP1 and GSP2 GTPases associated predominantly with GTP in the nucleus, with GDP in the cytoplasm). The polypeptide is Nucleoporin NUP60 (NUP60) (Saccharomyces cerevisiae (strain ATCC 204508 / S288c) (Baker's yeast)).